The sequence spans 401 residues: Phosphoglycerate kinase (401 aa).

Residues 24 to 26 (DFN), arginine 40, 63 to 66 (HFGR), arginine 122, and arginine 155 contribute to the substrate site. Residues lysine 206, glycine 297, glutamate 328, and 357–360 (GGDS) each bind ATP.

It belongs to the phosphoglycerate kinase family. In terms of assembly, monomer.

It is found in the cytoplasm. It carries out the reaction (2R)-3-phosphoglycerate + ATP = (2R)-3-phospho-glyceroyl phosphate + ADP. It participates in carbohydrate degradation; glycolysis; pyruvate from D-glyceraldehyde 3-phosphate: step 2/5. This is Phosphoglycerate kinase from Gloeothece citriformis (strain PCC 7424) (Cyanothece sp. (strain PCC 7424)).